A 439-amino-acid chain; its full sequence is SH3 domain-containing protein 1 (439 aa).

The 232-residue stretch at 32–263 folds into the BAR domain; that stretch reads DAVVVDEEEL…MIAEEEAIGS (232 aa). Residues 277–291 show a composition bias toward polar residues; it reads SLPQQEPNSNSSGEI. Residues 277–362 are disordered; sequence SLPQQEPNSN…SDDHHNHQLL (86 aa). The span at 318 to 358 shows a compositional bias: basic and acidic residues; the sequence is SPKDEMKSSPQEETKSNHQKEIKSSPQEEIKKSNGSDDHHN. The SH3 domain maps to 366 to 425; that stretch reads DSYFLAKVVHPFDAQAPGELSLAVDDYVIVRQVAGTGWSEGEYKGKAGWFPSAYVEKQEK.

As to quaternary structure, interacts with the auxilin-like protein AUXI1. As to expression, highly expressed in flowers. Detected in seedlings, roots, leaves and stems.

The protein resides in the cytoplasmic vesicle. The protein localises to the clathrin-coated vesicle. It is found in the cell membrane. It localises to the golgi apparatus. Its subcellular location is the trans-Golgi network. The protein resides in the endoplasmic reticulum. In terms of biological role, lipid binding protein bound strongly to phosphatidic acid, phosphatidylinositol-4-phosphate and phosphatidylinositol-4,5-bisphosphate. Binds actin in vitro. Involved in trafficking and modification of clathrin-coated vesicles. The chain is SH3 domain-containing protein 1 (SH3P1) from Arabidopsis thaliana (Mouse-ear cress).